A 293-amino-acid polypeptide reads, in one-letter code: Cell wall protein PGA31 (293 aa).

A signal peptide spans 1–18; that stretch reads MKFLTAASLLTLSSSALA. An N-linked (GlcNAc...) asparagine glycan is attached at N131. Residues 161–187 are disordered; sequence ESASSSSSSAAPEPTASSSEAPKETPV. Residues 163 to 180 are compositionally biased toward low complexity; the sequence is ASSSSSSAAPEPTASSSE. N-linked (GlcNAc...) asparagine glycosylation is present at N190. The segment at 233-262 is disordered; sequence VPSKTASSEAAPPKTTVDSVSKPAPSGKKP. G271 carries the GPI-anchor amidated glycine lipid modification. Residues 272–293 constitute a propeptide, removed in mature form; sequence AANALTGGSVAIAVAAAIGLVF.

This sequence belongs to the SRP1/TIP1 family. Post-translationally, the GPI-anchor is attached to the protein in the endoplasmic reticulum and serves to target the protein to the cell surface. There, the glucosamine-inositol phospholipid moiety is cleaved off and the GPI-modified mannoprotein is covalently attached via its lipidless GPI glycan remnant to the 1,6-beta-glucan of the outer cell wall layer.

The protein localises to the secreted. It localises to the cell wall. The protein resides in the membrane. Its function is as follows. Component of the cell wall involved in virulence which plays a role in the relationship between C.albicans and the host. Involved in the regulation or assembly of chitin within the cell wall. This chain is Cell wall protein PGA31 (PGA31), found in Candida albicans (strain SC5314 / ATCC MYA-2876) (Yeast).